The chain runs to 385 residues: 8-amino-7-oxononanoate synthase (385 aa).

R21 serves as a coordination point for substrate. 108-109 is a binding site for pyridoxal 5'-phosphate; that stretch reads GF. H133 provides a ligand contact to substrate. Positions 179, 207, and 233 each coordinate pyridoxal 5'-phosphate. At K236 the chain carries N6-(pyridoxal phosphate)lysine. T352 contributes to the substrate binding site.

This sequence belongs to the class-II pyridoxal-phosphate-dependent aminotransferase family. BioF subfamily. Homodimer. It depends on pyridoxal 5'-phosphate as a cofactor.

The enzyme catalyses 6-carboxyhexanoyl-[ACP] + L-alanine + H(+) = (8S)-8-amino-7-oxononanoate + holo-[ACP] + CO2. It functions in the pathway cofactor biosynthesis; biotin biosynthesis. Functionally, catalyzes the decarboxylative condensation of pimeloyl-[acyl-carrier protein] and L-alanine to produce 8-amino-7-oxononanoate (AON), [acyl-carrier protein], and carbon dioxide. The sequence is that of 8-amino-7-oxononanoate synthase from Salmonella paratyphi C (strain RKS4594).